The sequence spans 97 residues: Large ribosomal subunit protein eL21 (97 aa).

The span at 1-24 shows a compositional bias: basic residues; it reads MVQKPHSFRRKTRKKLRKHPRRRG. The segment at 1–25 is disordered; it reads MVQKPHSFRRKTRKKLRKHPRRRGL.

Belongs to the eukaryotic ribosomal protein eL21 family.

The polypeptide is Large ribosomal subunit protein eL21 (rpl21e) (Pyrococcus horikoshii (strain ATCC 700860 / DSM 12428 / JCM 9974 / NBRC 100139 / OT-3)).